Reading from the N-terminus, the 326-residue chain is Target of rapamycin complex subunit LST8 (326 aa).

Met1 carries the post-translational modification N-acetylmethionine. WD repeat units follow at residues 1-37, 40-80, 83-122, 126-165, and 168-207; these read MNTSPGTVGSDPVILATAGYDHTVRFWQAHSGICTRT, HQDS…PIIS, GVNKNVASVGFHEDGRWMYTGGEDCTARIWDLRSRNLQCQ, QVNAPINCVCLHPNQAELIVGDQSGAIHIWDLKTDHNEQL, and EPEVSITSAHIDPDASYMAAVNSTGNCYVWNLTGGIGDEV. Thr51 bears the Phosphothreonine mark. Lys86 is covalently cross-linked (Glycyl lysine isopeptide (Lys-Gly) (interchain with G-Cter in SUMO3)). Glycyl lysine isopeptide (Lys-Gly) (interchain with G-Cter in SUMO3) cross-links involve residues Lys215, Lys245, and Lys261. A WD 6 repeat occupies 218–257; it reads AHTRYALQCRFSPDSTLLATCSADQTCKIWRTSNFSLMTE. The WD 7 repeat unit spans residues 268 to 309; that stretch reads SSRGWMWGCAFSGDSQYIVTASSDNLARLWCVETGEIKREYG. Residue Lys305 forms a Glycyl lysine isopeptide (Lys-Gly) (interchain with G-Cter in SUMO3); alternate linkage. Residues Lys305 and Lys313 each participate in a glycyl lysine isopeptide (Lys-Gly) (interchain with G-Cter in ubiquitin); alternate cross-link. Lys313 participates in a covalent cross-link: Glycyl lysine isopeptide (Lys-Gly) (interchain with G-Cter in SUMO1); alternate.

It belongs to the WD repeat LST8 family. Part of the mechanistic target of rapamycin complex 1 (mTORC1) which contains MTOR, MLST8 and RPTOR. mTORC1 associates with AKT1S1/PRAS40, which inhibits its activity. mTORC1 binds to and is inhibited by FKBP12-rapamycin. Within mTORC1, interacts directly with MTOR and RPTOR. Component of the mechanistic target of rapamycin complex 2 (mTORC2), consisting in two heterotretramers composed of MTOR, MLST8, RICTOR and MAPKAP1/SIN1. Contrary to mTORC1, mTORC2 does not bind to and is not sensitive to FKBP12-rapamycin. mTORC1 and mTORC2 associate with DEPTOR, which regulates their activity. Interacts with RHEB. Interacts with MEAK7. Interacts with SIK3. Interacts with SLC38A7; this interaction promotes the recruitment of mTORC1 to the lysosome and its subsequent activation. Phosphorylation at Thr-51 by CDK1 promotes ubiquitination by the SCF(FBXW7) complex, followed by degradation. In terms of processing, ubiquitination by the SCF(FBXW7) and SCF(FBXW11) complexes following phosphorylation at Thr-51 by CDK1, leads to its degradation by the proteasome. Ubiquitination at Lys-305 and Lys-313 by TRAF2 via 'Lys-63'-linked polyubiquitin chains inhibits formation of the mTORC2 complex, while promoting formation of the mTORC1 complex: ubiquitination disrupts the interaction between MLST8 and MAPKAP1/SIN1 to favor mTORC1 assembly. Deubiquitination at Lys-305 and Lys-313 by OTUD7B promotes MLST8 interaction with MAPKAP1/SIN1, facilitating mTORC2 assembly. Post-translationally, sumoylation with SUMO1, SUMO2 and SUMO3 promotes assembly of both mTORC1 and mTORC2 complexes.

Its subcellular location is the lysosome membrane. It is found in the cytoplasm. In terms of biological role, subunit of both mTORC1 and mTORC2, which regulates cell growth and survival in response to nutrient and hormonal signals. mTORC1 is activated in response to growth factors or amino acids. In response to nutrients, mTORC1 is recruited to the lysosome membrane and promotes protein, lipid and nucleotide synthesis by phosphorylating several substrates, such as ribosomal protein S6 kinase (RPS6KB1 and RPS6KB2) and EIF4EBP1 (4E-BP1). In the same time, it inhibits catabolic pathways by phosphorylating the autophagy initiation components ULK1 and ATG13, as well as transcription factor TFEB, a master regulators of lysosomal biogenesis and autophagy. The mTORC1 complex is inhibited in response to starvation and amino acid depletion. Within mTORC1, MLST8 interacts directly with MTOR and enhances its kinase activity. In nutrient-poor conditions, stabilizes the MTOR-RPTOR interaction and favors RPTOR-mediated inhibition of MTOR activity. As part of the mTORC2 complex, transduces signals from growth factors to pathways involved in proliferation, cytoskeletal organization, lipogenesis and anabolic output. mTORC2 is also activated by growth factors, but seems to be nutrient-insensitive. In response to growth factors, mTORC2 phosphorylates and activates AGC protein kinase family members, including AKT (AKT1, AKT2 and AKT3), PKC (PRKCA, PRKCB and PRKCE) and SGK1. mTORC2 functions upstream of Rho GTPases to regulate the actin cytoskeleton, probably by activating one or more Rho-type guanine nucleotide exchange factors. mTORC2 promotes the serum-induced formation of stress-fibers or F-actin. mTORC2 plays a critical role in AKT1 activation by mediating phosphorylation of different sites depending on the context, such as 'Thr-450', 'Ser-473', 'Ser-477' or 'Thr-479', facilitating the phosphorylation of the activation loop of AKT1 on 'Thr-308' by PDPK1/PDK1 which is a prerequisite for full activation. mTORC2 regulates the phosphorylation of SGK1 at 'Ser-422'. mTORC2 also modulates the phosphorylation of PRKCA on 'Ser-657'. Within mTORC2, MLST8 acts as a bridge between MAPKAP1/SIN1 and MTOR. The protein is Target of rapamycin complex subunit LST8 of Bos taurus (Bovine).